We begin with the raw amino-acid sequence, 377 residues long: 23S rRNA (uracil(747)-C(5))-methyltransferase RlmC (377 aa).

4 residues coordinate [4Fe-4S] cluster: Cys3, Cys11, Cys14, and Cys87. S-adenosyl-L-methionine is bound by residues Gln212, Phe241, Glu262, and Asn307. The active-site Nucleophile is Cys334.

It belongs to the class I-like SAM-binding methyltransferase superfamily. RNA M5U methyltransferase family. RlmC subfamily.

The enzyme catalyses uridine(747) in 23S rRNA + S-adenosyl-L-methionine = 5-methyluridine(747) in 23S rRNA + S-adenosyl-L-homocysteine + H(+). Catalyzes the formation of 5-methyl-uridine at position 747 (m5U747) in 23S rRNA. This is 23S rRNA (uracil(747)-C(5))-methyltransferase RlmC from Edwardsiella ictaluri (strain 93-146).